The primary structure comprises 178 residues: Nascent polypeptide-associated complex subunit alpha (178 aa).

In terms of domain architecture, NAC-A/B spans 20–84; it reads SKNEKKAREL…AKVDDMNKRI (65 aa). Residues 87–104 are compositionally biased toward low complexity; it reads AQAQQEQQEALTKAAADA. A disordered region spans residues 87–142; the sequence is AQAQQEQQEALTKAAADAETADKSPESITNDLQNASLEDKTVEEDEGEVDETGLDS. Residues 112–122 are compositionally biased toward polar residues; sequence ESITNDLQNAS. Acidic residues predominate over residues 127–139; that stretch reads TVEEDEGEVDETG. The region spanning 140-178 is the UBA domain; the sequence is LDSKDIEIIVEQTQVSRAKAVKALRAHKGDMVNAIMELS.

The protein belongs to the NAC-alpha family. As to quaternary structure, part of the nascent polypeptide-associated complex (NAC), consisting of EGD2 and EGD1. NAC associates with ribosomes via EGD1.

It localises to the cytoplasm. Its subcellular location is the nucleus. In terms of biological role, component of the nascent polypeptide-associated complex (NAC), a dynamic component of the ribosomal exit tunnel, protecting the emerging polypeptides from interaction with other cytoplasmic proteins to ensure appropriate nascent protein targeting. The NAC complex also promotes mitochondrial protein import by enhancing productive ribosome interactions with the outer mitochondrial membrane and blocks the inappropriate interaction of ribosomes translating non-secretory nascent polypeptides with translocation sites in the membrane of the endoplasmic reticulum. EGD2 may also be involved in transcription regulation. In Meyerozyma guilliermondii (strain ATCC 6260 / CBS 566 / DSM 6381 / JCM 1539 / NBRC 10279 / NRRL Y-324) (Yeast), this protein is Nascent polypeptide-associated complex subunit alpha (EGD2).